Reading from the N-terminus, the 183-residue chain is Translation initiation factor IF-3 (183 aa).

Belongs to the IF-3 family. As to quaternary structure, monomer.

The protein localises to the cytoplasm. IF-3 binds to the 30S ribosomal subunit and shifts the equilibrium between 70S ribosomes and their 50S and 30S subunits in favor of the free subunits, thus enhancing the availability of 30S subunits on which protein synthesis initiation begins. The sequence is that of Translation initiation factor IF-3 from Azobacteroides pseudotrichonymphae genomovar. CFP2.